A 212-amino-acid chain; its full sequence is Thymidylate kinase (212 aa).

11–18 is a binding site for ATP; sequence GMEGAGKS.

Belongs to the thymidylate kinase family.

The enzyme catalyses dTMP + ATP = dTDP + ADP. Functionally, phosphorylation of dTMP to form dTDP in both de novo and salvage pathways of dTTP synthesis. The chain is Thymidylate kinase from Colwellia psychrerythraea (strain 34H / ATCC BAA-681) (Vibrio psychroerythus).